Here is a 278-residue protein sequence, read N- to C-terminus: Dermonecrotic toxin LspiSicTox-betaIE2iii (278 aa).

His5 is a catalytic residue. Glu25 and Asp27 together coordinate Mg(2+). His41 serves as the catalytic Nucleophile. 2 cysteine pairs are disulfide-bonded: Cys45–Cys51 and Cys47–Cys190. Residue Asp85 participates in Mg(2+) binding.

The protein belongs to the arthropod phospholipase D family. Class II subfamily. It depends on Mg(2+) as a cofactor. In terms of tissue distribution, expressed by the venom gland.

The protein resides in the secreted. It carries out the reaction an N-(acyl)-sphingosylphosphocholine = an N-(acyl)-sphingosyl-1,3-cyclic phosphate + choline. It catalyses the reaction an N-(acyl)-sphingosylphosphoethanolamine = an N-(acyl)-sphingosyl-1,3-cyclic phosphate + ethanolamine. The enzyme catalyses a 1-acyl-sn-glycero-3-phosphocholine = a 1-acyl-sn-glycero-2,3-cyclic phosphate + choline. The catalysed reaction is a 1-acyl-sn-glycero-3-phosphoethanolamine = a 1-acyl-sn-glycero-2,3-cyclic phosphate + ethanolamine. In terms of biological role, dermonecrotic toxins cleave the phosphodiester linkage between the phosphate and headgroup of certain phospholipids (sphingolipid and lysolipid substrates), forming an alcohol (often choline) and a cyclic phosphate. This toxin acts on sphingomyelin (SM). It may also act on ceramide phosphoethanolamine (CPE), lysophosphatidylcholine (LPC) and lysophosphatidylethanolamine (LPE), but not on lysophosphatidylserine (LPS), and lysophosphatidylglycerol (LPG). It acts by transphosphatidylation, releasing exclusively cyclic phosphate products as second products. Induces dermonecrosis, hemolysis, increased vascular permeability, edema, inflammatory response, and platelet aggregation. The polypeptide is Dermonecrotic toxin LspiSicTox-betaIE2iii (Loxosceles spinulosa (Recluse spider)).